The following is a 130-amino-acid chain: Small ribosomal subunit protein uS8 (130 aa).

It belongs to the universal ribosomal protein uS8 family. Part of the 30S ribosomal subunit. Contacts proteins S5 and S12.

Its function is as follows. One of the primary rRNA binding proteins, it binds directly to 16S rRNA central domain where it helps coordinate assembly of the platform of the 30S subunit. In Hahella chejuensis (strain KCTC 2396), this protein is Small ribosomal subunit protein uS8.